Reading from the N-terminus, the 93-residue chain is Small ribosomal subunit protein uS15 (93 aa).

It belongs to the universal ribosomal protein uS15 family. Part of the 30S ribosomal subunit. Forms a bridge to the 50S subunit in the 70S ribosome, contacting the 23S rRNA.

Functionally, one of the primary rRNA binding proteins, it binds directly to 16S rRNA where it helps nucleate assembly of the platform of the 30S subunit by binding and bridging several RNA helices of the 16S rRNA. Forms an intersubunit bridge (bridge B4) with the 23S rRNA of the 50S subunit in the ribosome. This Ehrlichia ruminantium (strain Gardel) protein is Small ribosomal subunit protein uS15.